Reading from the N-terminus, the 267-residue chain is Undecaprenyl-diphosphatase (267 aa).

7 helical membrane-spanning segments follow: residues 7-29 (LILGIIEGLTEFLPVSSTGHMIL), 41-61 (FWKSFLIIIQLGSILAVIFVF), 69-89 (LDIWLKLAAGFFPTGVIGLFV), 96-116 (LFNGWVVVGMLIFGGVVFILI), 173-193 (AAEFSFLLAIPTMIIATAYSI), 207-227 (IPLGIGFITAFVVAVLVIKFF), and 239-259 (FGIYRIILGFVFFYLYYSGIL).

It belongs to the UppP family.

Its subcellular location is the cell inner membrane. The enzyme catalyses di-trans,octa-cis-undecaprenyl diphosphate + H2O = di-trans,octa-cis-undecaprenyl phosphate + phosphate + H(+). In terms of biological role, catalyzes the dephosphorylation of undecaprenyl diphosphate (UPP). Confers resistance to bacitracin. This chain is Undecaprenyl-diphosphatase, found in Campylobacter jejuni subsp. jejuni serotype O:6 (strain 81116 / NCTC 11828).